A 163-amino-acid chain; its full sequence is Photosystem II extrinsic protein V (163 aa).

An N-terminal signal peptide occupies residues 1–26 (MFKKSSQLFSLVFFTIFSIFIGTASA). Cys-63, Cys-66, His-67, and Met-130 together coordinate heme c.

It belongs to the cytochrome c family. PsbV subfamily. As to quaternary structure, PSII is composed of 1 copy each of membrane proteins PsbA, PsbB, PsbC, PsbD, PsbE, PsbF, PsbH, PsbI, PsbJ, PsbK, PsbL, PsbM, PsbT, PsbY, PsbZ, Psb30/Ycf12, at least 3 peripheral proteins of the oxygen-evolving complex and a large number of cofactors. It forms dimeric complexes. Heme c serves as cofactor.

It localises to the plastid. It is found in the chloroplast thylakoid membrane. Its function is as follows. One of the extrinsic, lumenal subunits of photosystem II (PSII). PSII is a light-driven water plastoquinone oxidoreductase, using light energy to abstract electrons from H(2)O, generating a proton gradient subsequently used for ATP formation. The extrinsic proteins stabilize the structure of photosystem II oxygen-evolving complex (OEC), the ion environment of oxygen evolution and protect the OEC against heat-induced inactivation. This Phaeodactylum tricornutum (strain CCAP 1055/1) protein is Photosystem II extrinsic protein V.